Consider the following 257-residue polypeptide: Nickel import system ATP-binding protein NikD (257 aa).

The region spanning 4 to 245 is the ABC transporter domain; it reads IDIQNLTIKN…HLHPYTERLI (242 aa). 37 to 44 provides a ligand contact to ATP; it reads GESGAGKS.

It belongs to the ABC transporter superfamily. In terms of assembly, the complex is composed of two ATP-binding proteins (NikD and NikE), two transmembrane proteins (NikB and NikC) and a solute-binding protein (NikA).

The protein localises to the cell membrane. It catalyses the reaction Ni(2+)(out) + ATP + H2O = Ni(2+)(in) + ADP + phosphate + H(+). Functionally, part of the ABC transporter complex NikABCDE (Opp2) involved in nickel import. Probably responsible for energy coupling to the transport system. This is Nickel import system ATP-binding protein NikD from Staphylococcus aureus (strain MSSA476).